A 291-amino-acid polypeptide reads, in one-letter code: uncharacterized protein (291 aa).

A run of 4 helical transmembrane segments spans residues 13–33, 84–104, 111–131, and 219–239; these read IILI…SITI, IVLF…IGII, LLHL…FIII, and LIYC…IYYL.

Its subcellular location is the cell membrane. This is an uncharacterized protein from Ureaplasma parvum serovar 3 (strain ATCC 700970).